We begin with the raw amino-acid sequence, 128 residues long: Sulfurtransferase TusD (128 aa).

Cysteine 78 functions as the Cysteine persulfide intermediate in the catalytic mechanism.

This sequence belongs to the DsrE/TusD family. As to quaternary structure, heterohexamer, formed by a dimer of trimers. The hexameric TusBCD complex contains 2 copies each of TusB, TusC and TusD. The TusBCD complex interacts with TusE.

Its subcellular location is the cytoplasm. Functionally, part of a sulfur-relay system required for 2-thiolation of 5-methylaminomethyl-2-thiouridine (mnm(5)s(2)U) at tRNA wobble positions. Accepts sulfur from TusA and transfers it in turn to TusE. This is Sulfurtransferase TusD from Klebsiella pneumoniae subsp. pneumoniae (strain ATCC 700721 / MGH 78578).